The primary structure comprises 410 residues: Multifunctional CCA protein (410 aa).

2 residues coordinate ATP: G8 and R11. CTP contacts are provided by G8 and R11. Mg(2+)-binding residues include D21 and D23. Residues R91, R138, and R141 each coordinate ATP. The CTP site is built by R91, R138, and R141. The region spanning 229-347 is the HD domain; sequence TGVHQEMVSD…AQLALVCEAD (119 aa).

Belongs to the tRNA nucleotidyltransferase/poly(A) polymerase family. Bacterial CCA-adding enzyme type 1 subfamily. As to quaternary structure, monomer. Can also form homodimers and oligomers. Mg(2+) is required as a cofactor. Requires Ni(2+) as cofactor.

It carries out the reaction a tRNA precursor + 2 CTP + ATP = a tRNA with a 3' CCA end + 3 diphosphate. It catalyses the reaction a tRNA with a 3' CCA end + 2 CTP + ATP = a tRNA with a 3' CCACCA end + 3 diphosphate. In terms of biological role, catalyzes the addition and repair of the essential 3'-terminal CCA sequence in tRNAs without using a nucleic acid template. Adds these three nucleotides in the order of C, C, and A to the tRNA nucleotide-73, using CTP and ATP as substrates and producing inorganic pyrophosphate. tRNA 3'-terminal CCA addition is required both for tRNA processing and repair. Also involved in tRNA surveillance by mediating tandem CCA addition to generate a CCACCA at the 3' terminus of unstable tRNAs. While stable tRNAs receive only 3'-terminal CCA, unstable tRNAs are marked with CCACCA and rapidly degraded. This is Multifunctional CCA protein from Xanthomonas campestris pv. campestris (strain B100).